Consider the following 546-residue polypeptide: Probable protein kinase UbiB (546 aa).

Positions 124 to 502 constitute a Protein kinase domain; it reads DFDIQPLASA…HVRQSQSRYL (379 aa). Residues 130–138 and Lys153 each bind ATP; that span reads LASASIAQV. The active-site Proton acceptor is the Asp288. 2 helical membrane passes run 501-521 and 522-542; these read YLLGIGATLLLSGSFLLVNRP and EWGLMPGWLMVGGVVVWLVGW.

The protein belongs to the ABC1 family. UbiB subfamily.

It is found in the cell inner membrane. Its pathway is cofactor biosynthesis; ubiquinone biosynthesis [regulation]. Functionally, is probably a protein kinase regulator of UbiI activity which is involved in aerobic coenzyme Q (ubiquinone) biosynthesis. The sequence is that of Probable protein kinase UbiB from Salmonella enteritidis PT4 (strain P125109).